Consider the following 95-residue polypeptide: Aspartyl/glutamyl-tRNA(Asn/Gln) amidotransferase subunit C (95 aa).

The tract at residues 51–95 (PTSHATLTSSRLREDVTRPSLPPEKSLANAPAKSDTSFAVPKIIE) is disordered.

Belongs to the GatC family. As to quaternary structure, heterotrimer of A, B and C subunits.

It carries out the reaction L-glutamyl-tRNA(Gln) + L-glutamine + ATP + H2O = L-glutaminyl-tRNA(Gln) + L-glutamate + ADP + phosphate + H(+). The catalysed reaction is L-aspartyl-tRNA(Asn) + L-glutamine + ATP + H2O = L-asparaginyl-tRNA(Asn) + L-glutamate + ADP + phosphate + 2 H(+). In terms of biological role, allows the formation of correctly charged Asn-tRNA(Asn) or Gln-tRNA(Gln) through the transamidation of misacylated Asp-tRNA(Asn) or Glu-tRNA(Gln) in organisms which lack either or both of asparaginyl-tRNA or glutaminyl-tRNA synthetases. The reaction takes place in the presence of glutamine and ATP through an activated phospho-Asp-tRNA(Asn) or phospho-Glu-tRNA(Gln). The sequence is that of Aspartyl/glutamyl-tRNA(Asn/Gln) amidotransferase subunit C from Myxococcus xanthus (strain DK1622).